Reading from the N-terminus, the 517-residue chain is Heat shock 70-related protein 5 (517 aa).

Belongs to the heat shock protein 70 family.

In terms of biological role, may function in protein folding and assembly, and disassembly of protein complexes. The polypeptide is Heat shock 70-related protein 5 (Dictyostelium discoideum (Social amoeba)).